A 295-amino-acid polypeptide reads, in one-letter code: Protoheme IX farnesyltransferase (295 aa).

9 helical membrane passes run 9 to 29, 36 to 56, 80 to 100, 108 to 128, 135 to 155, 163 to 183, 209 to 229, 230 to 250, and 265 to 285; these read ITKP…FFLA, FGVF…GCVF, LVSL…GVAL, LAAL…SLYL, GTLV…CAVT, LTLL…IAIF, IMLY…GGYA, GLNY…MAWK, and FVFS…DFQV.

It belongs to the UbiA prenyltransferase family. Protoheme IX farnesyltransferase subfamily.

The protein resides in the cell inner membrane. The enzyme catalyses heme b + (2E,6E)-farnesyl diphosphate + H2O = Fe(II)-heme o + diphosphate. Its pathway is porphyrin-containing compound metabolism; heme O biosynthesis; heme O from protoheme: step 1/1. In terms of biological role, converts heme B (protoheme IX) to heme O by substitution of the vinyl group on carbon 2 of heme B porphyrin ring with a hydroxyethyl farnesyl side group. The sequence is that of Protoheme IX farnesyltransferase from Pseudomonas savastanoi pv. phaseolicola (strain 1448A / Race 6) (Pseudomonas syringae pv. phaseolicola (strain 1448A / Race 6)).